The primary structure comprises 675 residues: NADH-ubiquinone oxidoreductase chain 5 (675 aa).

19 consecutive transmembrane segments (helical) span residues 3 to 23 (LLPLLFPLLNLFISCILGKFL), 27 to 47 (VLFVLVINMLFSAIFSFWIFY), 75 to 95 (FLFDSITSVMLVLVVFVSLLV), 108 to 127 (HIIRFLGYLSLFTFFMLMLV), 132 to 154 (FVQLFLGWEGVGLSSYLLINFWY), 177 to 197 (IYFSLLVIFFFFKSFDFGVVF), 211 to 231 (FLGFSLNRVDLIVIFLFLGAI), 251 to 271 (TPVSALIHAATMVTAGVFVLI), 284 to 304 (LFLVSLIGGLTALFAGTVGLV), 311 to 329 (VIAYSTCSQLGYMFFACGM), 334 to 354 (VGLFHLFNHGFFKALLFLGAG), 380 to 400 (YVAILVGSLSLTGFPFLTGFY), 413 to 433 (FSINSFFIYWLGVFAAFITSF), 462 to 482 (SFIFYVLAFLGFLSIFIGFIF), 519 to 539 (LIPLVFSIVGLFFSLFVYFVI), 564 to 584 (YFDLLYNNIFVFNLLSSFYLL), 593 to 613 (LIELFGPLSFVRLINKSSIIF), 624 to 644 (YIFVVLLGLMFFIKLTSSLFF), and 649 to 669 (SFFNFGLFICLLSLIIFLSFG).

Belongs to the complex I subunit 5 family.

It localises to the mitochondrion inner membrane. The catalysed reaction is a ubiquinone + NADH + 5 H(+)(in) = a ubiquinol + NAD(+) + 4 H(+)(out). Its function is as follows. Core subunit of the mitochondrial membrane respiratory chain NADH dehydrogenase (Complex I) that is believed to belong to the minimal assembly required for catalysis. Complex I functions in the transfer of electrons from NADH to the respiratory chain. The immediate electron acceptor for the enzyme is believed to be ubiquinone. In Acanthamoeba castellanii (Amoeba), this protein is NADH-ubiquinone oxidoreductase chain 5 (ND5).